Reading from the N-terminus, the 119-residue chain is Ribonuclease P protein component (119 aa).

Belongs to the RnpA family. As to quaternary structure, consists of a catalytic RNA component (M1 or rnpB) and a protein subunit.

It carries out the reaction Endonucleolytic cleavage of RNA, removing 5'-extranucleotides from tRNA precursor.. In terms of biological role, RNaseP catalyzes the removal of the 5'-leader sequence from pre-tRNA to produce the mature 5'-terminus. It can also cleave other RNA substrates such as 4.5S RNA. The protein component plays an auxiliary but essential role in vivo by binding to the 5'-leader sequence and broadening the substrate specificity of the ribozyme. In Dictyoglomus turgidum (strain DSM 6724 / Z-1310), this protein is Ribonuclease P protein component.